A 308-amino-acid polypeptide reads, in one-letter code: Porphobilinogen deaminase (308 aa).

S-(dipyrrolylmethanemethyl)cysteine is present on Cys-241.

Belongs to the HMBS family. As to quaternary structure, monomer. It depends on dipyrromethane as a cofactor.

The enzyme catalyses 4 porphobilinogen + H2O = hydroxymethylbilane + 4 NH4(+). It participates in porphyrin-containing compound metabolism; protoporphyrin-IX biosynthesis; coproporphyrinogen-III from 5-aminolevulinate: step 2/4. Its function is as follows. Tetrapolymerization of the monopyrrole PBG into the hydroxymethylbilane pre-uroporphyrinogen in several discrete steps. This Staphylococcus aureus (strain Mu50 / ATCC 700699) protein is Porphobilinogen deaminase.